Reading from the N-terminus, the 367-residue chain is Voltage-gated potassium channel subunit beta-2 (367 aa).

Phosphoserine occurs at positions 9, 14, and 20. An Asymmetric dimethylarginine; alternate modification is found at Arg28. Omega-N-methylarginine; alternate is present on Arg28. Residue Ser31 is modified to Phosphoserine. NADP(+) is bound by residues Thr56, Trp57, Gln63, and Asp85. Tyr90 (proton donor/acceptor) is an active-site residue. Residue Ser112 is modified to Phosphoserine. Lys124 is modified (N6-acetyllysine). 18 residues coordinate NADP(+): Asn158, Ser188, Arg189, Gln214, Trp243, Ser244, Pro245, Leu246, Ala247, Cys248, Lys254, Tyr262, Arg264, Gly323, Ser325, Gln329, Glu332, and Asn333.

This sequence belongs to the shaker potassium channel beta subunit family. As to quaternary structure, homotetramer. Interaction with tetrameric potassium channel alpha subunits gives rise to a heterooctamer. Identified in potassium channel complexes containing KCNA1, KCNA2, KCNA4, KCNA5, KCNA6, KCNAB1, KCNAB2 and KCND3. Interacts (in unphosphorylated form) with MAPRE1. Forms a ternary complex with SQSTM1 and PRKCZ. Post-translationally, phosphorylated by PRKCZ; may be regulated by incorporation in a complex composed of PRKCZ and SQSTM1. As to expression, detected in brain. Detected at basket cell terminals in cerebellum and in the juxtaparanodal region of nodes of Ranvier (at protein level). Strongest expression in brain and eye. Highest levels in brain detected in brainstem and diencephalon. Strong expression also detected in lung and heart. Moderate expression in kidney, T-lymphocytes and skeletal muscle.

The protein localises to the cytoplasm. It localises to the membrane. Its subcellular location is the cell membrane. The protein resides in the cell projection. It is found in the axon. The protein localises to the synapse. It localises to the synaptosome. Its subcellular location is the cytoskeleton. The catalysed reaction is hydroxyacetone + NADP(+) = methylglyoxal + NADPH + H(+). It carries out the reaction (E)-4-oxonon-2-en-1-ol + NADP(+) = (E)-4-oxonon-2-enal + NADPH + H(+). Its function is as follows. Regulatory subunit of the voltage-gated potassium (Kv) Shaker channel family. Shaker channels are composed of pore-forming and potassium-conducting alpha subunits and of regulatory beta subunits. The beta-2/KCNAB2 subunit promotes potassium channel closure via a mechanism that does not involve physical obstruction of the channel pore. Promotes the inactivation of Kv1.4/KCNA4 and Kv1.5/KCNA5 alpha subunit-containing channels. Displays nicotinamide adenine dinucleotide phosphate (NADPH)-dependent aldoketoreductase activity by catalyzing the NADPH-dependent reduction of a wide range of aldehyde and ketone substrates. Substrate specificity includes methylglyoxal, 9,10-phenanthrenequinone, prostaglandin J2, 4-nitrobenzaldehyde, 4-nitroacetophenone and 4-oxo-trans-2-nonenal (in vitro, no physiological substrate identified yet). The binding of oxidized and reduced nucleotide cofactors alters Kv channel gating and may contribute to dynamic fine tuning of cell excitability. Contributes to the regulation of nerve signaling, and prevents neuronal hyperexcitability. The chain is Voltage-gated potassium channel subunit beta-2 from Mus musculus (Mouse).